The primary structure comprises 555 residues: MATTEANTMAQANSQTTIEPVRHLANFPPSIWGDQFLSFSLDNSQLEAYSKAMEQPKENVRRMILNPAIDTNEKLGLIYCVYRLGLTYNFSKDIDGQLDELFKQLNLQSYNEADLYTISIHFQVFRHFGYRFSCDVFNKFKDSSSGKFKEDMTRDVRGMISLYESAQLRIRGESILDEAGAFAESKLKTIEKTLDGTLAQQVKHVLERPFNRGHQMVEARKYLFLFEEEISRYDSLLMLAKVHFNYLQLLQKEELRSVSKWWKDLDLPAKTLYVRDRVPELYVWILAFFLEPYYSEVRIITTKIVLLVLVLDDTYDAYATIEESRLLTHAINRWEVSAMLQLPEYMKPLYEILLNEYDGFYKHGRTNVIETSKKAFQDLARSYHQESEWRHAKEVPSFEEYMKIGTTTSAHNVLSKTALIGMGNIVTREALAWYESYPKIVQLSELIGRLEDDVVSVEFERERAPTATSVDAYMKTYGVSENVAVKILKKLVENGWKDLNEACLKPTEVSLDLLAPIIGLTNMTDVAYRHNDGLTFPEKTLKEYITLLFCVPVPM.

Mg(2+)-binding residues include aspartate 312, aspartate 316, aspartate 452, serine 456, and glutamate 460. The short motif at 312-316 (DDTYD) is the DDXXD motif element.

Belongs to the terpene synthase family. It depends on Mg(2+) as a cofactor. As to expression, mainly expressed in sunflower trichomes.

The catalysed reaction is (2E,6E)-farnesyl diphosphate = alpha-copaene + diphosphate. It carries out the reaction (2E,6E)-farnesyl diphosphate = alpha-muurolene + diphosphate. The enzyme catalyses (2E,6E)-farnesyl diphosphate = alpha-humulene + diphosphate. It participates in secondary metabolite biosynthesis; terpenoid biosynthesis. In terms of biological role, involved in the biosynthesis of germacrene-derived sesquiterpene lactones. Catalyzes the cyclization of farnesyl diphosphate to alpha-copaene, delta-cadinene, alpha-muurolene, beta-caryophyllene and alpha-humulene. The chain is Alpha-copaene synthase (CS) from Helianthus annuus (Common sunflower).